The primary structure comprises 139 residues: Actin-depolymerizing factor 3 (139 aa).

The 133-residue stretch at 7–139 (GVAVNDECML…SLDEIKDRAR (133 aa)) folds into the ADF-H domain.

This sequence belongs to the actin-binding proteins ADF family. In terms of tissue distribution, expressed in all tissues except pollen.

It is found in the cytoplasm. In terms of biological role, actin-depolymerizing protein. Severs actin filaments (F-actin) and binds to actin monomers. The sequence is that of Actin-depolymerizing factor 3 (ADF3) from Zea mays (Maize).